A 366-amino-acid chain; its full sequence is Uroporphyrinogen decarboxylase (366 aa).

Substrate-binding positions include 28–32 (RQAGR), D78, Y160, T215, and H333.

The protein belongs to the uroporphyrinogen decarboxylase family. As to quaternary structure, homodimer.

Its subcellular location is the cytoplasm. The catalysed reaction is uroporphyrinogen III + 4 H(+) = coproporphyrinogen III + 4 CO2. The protein operates within porphyrin-containing compound metabolism; protoporphyrin-IX biosynthesis; coproporphyrinogen-III from 5-aminolevulinate: step 4/4. In terms of biological role, catalyzes the decarboxylation of four acetate groups of uroporphyrinogen-III to yield coproporphyrinogen-III. This chain is Uroporphyrinogen decarboxylase, found in Paraburkholderia phytofirmans (strain DSM 17436 / LMG 22146 / PsJN) (Burkholderia phytofirmans).